The following is an 808-amino-acid chain: Sucrose synthase 2 (808 aa).

Position 10 is a phosphoserine; by CPK (Ser-10). The GT-B glycosyltransferase stretch occupies residues 272–749 (MMFNVVILSP…GLQRIYEKYT (478 aa)).

Belongs to the glycosyltransferase 1 family. Plant sucrose synthase subfamily. As to quaternary structure, homotetramer or heterotetramer with SUS1. In terms of processing, phosphorylated at Ser-10 by CPK23 in developing seeds. As to expression, predominantly expressed in the leaf tissues. Expressed in seeds, and at lower levels in roots. Expressed in leaf mesophyll and phloem (at protein level).

The catalysed reaction is an NDP-alpha-D-glucose + D-fructose = a ribonucleoside 5'-diphosphate + sucrose + H(+). Its activity is regulated as follows. Activated by phosphorylation at Ser-10 by CPK23. Functionally, sucrose-cleaving enzyme that provides UDP-glucose and fructose for various metabolic pathways. Functions in developing seeds by supplying substrates for the biosynthesis of storage products. The protein is Sucrose synthase 2 (SUS2) of Oryza sativa subsp. japonica (Rice).